We begin with the raw amino-acid sequence, 141 residues long: Large ribosomal subunit protein bL17 (141 aa).

Residues 120-141 are disordered; it reads TSAKGQDSGPVLTADEDEFEAA.

It belongs to the bacterial ribosomal protein bL17 family. As to quaternary structure, part of the 50S ribosomal subunit. Contacts protein L32.

This Novosphingobium aromaticivorans (strain ATCC 700278 / DSM 12444 / CCUG 56034 / CIP 105152 / NBRC 16084 / F199) protein is Large ribosomal subunit protein bL17.